The following is a 306-amino-acid chain: UDP-3-O-acyl-N-acetylglucosamine deacetylase (306 aa).

3 residues coordinate Zn(2+): histidine 79, histidine 239, and aspartate 243. Histidine 266 (proton donor) is an active-site residue.

This sequence belongs to the LpxC family. Zn(2+) is required as a cofactor.

The enzyme catalyses a UDP-3-O-[(3R)-3-hydroxyacyl]-N-acetyl-alpha-D-glucosamine + H2O = a UDP-3-O-[(3R)-3-hydroxyacyl]-alpha-D-glucosamine + acetate. The protein operates within glycolipid biosynthesis; lipid IV(A) biosynthesis; lipid IV(A) from (3R)-3-hydroxytetradecanoyl-[acyl-carrier-protein] and UDP-N-acetyl-alpha-D-glucosamine: step 2/6. In terms of biological role, catalyzes the hydrolysis of UDP-3-O-myristoyl-N-acetylglucosamine to form UDP-3-O-myristoylglucosamine and acetate, the committed step in lipid A biosynthesis. The chain is UDP-3-O-acyl-N-acetylglucosamine deacetylase from Haemophilus ducreyi (strain 35000HP / ATCC 700724).